Here is a 159-residue protein sequence, read N- to C-terminus: Type-1 angiotensin II receptor-associated protein (159 aa).

Over 1-23 (MELPAVNLKVILLGHWLLTTWGC) the chain is Extracellular. A helical membrane pass occupies residues 24-44 (IVFSGSYAWANFTILALGVWA). Residues 45–55 (VAQRDSIDAIS) are Cytoplasmic-facing. A helical membrane pass occupies residues 56–76 (MFLGGLLATIFLDIVHISIFY). Topologically, residues 77-86 (PRVSLTDTGR) are extracellular. The chain crosses the membrane as a helical span at residues 87–107 (FGVGMAILSLLLKPLSCCFVY). Over 108–159 (HMYRERGGELLVHTGFLGSSQDRSAYQTIDSAEAPADPFAVPEGRSQDARGY) the chain is Cytoplasmic. Residues 110–122 (YRERGGELLVHTG) form an interaction with AGTR1 region. Ser126 and Ser127 each carry phosphoserine. Phosphothreonine is present on Thr135. Residues Ser138 and Ser153 each carry the phosphoserine modification. Residues 140–159 (EAPADPFAVPEGRSQDARGY) form a disordered region.

As to quaternary structure, interacts with RACK1, and with the C-terminal region of AGTR1. In terms of tissue distribution, ubiquitous but more abundant in kidney, heart, pancreas and thyroid.

The protein localises to the endoplasmic reticulum membrane. Its subcellular location is the golgi apparatus membrane. It localises to the cytoplasmic vesicle membrane. In terms of biological role, appears to be a negative regulator of type-1 angiotensin II receptor-mediated signaling by regulating receptor internalization as well as mechanism of receptor desensitization such as phosphorylation. Also induces a decrease in cell proliferation and angiotensin II-stimulated transcriptional activity. The polypeptide is Type-1 angiotensin II receptor-associated protein (AGTRAP) (Homo sapiens (Human)).